Here is a 101-residue protein sequence, read N- to C-terminus: MAKQSMIARDVKRAKLADKFYAKREELKKIIYDINSSDEDRWAAVLKLQMLPRDSSPSRQRSRCRQTGRPHGVLSKFGLSRIKVREAAMRGEIPGLKKASW.

The protein belongs to the universal ribosomal protein uS14 family. In terms of assembly, part of the 30S ribosomal subunit. Contacts proteins S3 and S10.

Functionally, binds 16S rRNA, required for the assembly of 30S particles and may also be responsible for determining the conformation of the 16S rRNA at the A site. This chain is Small ribosomal subunit protein uS14, found in Haemophilus ducreyi (strain 35000HP / ATCC 700724).